The primary structure comprises 391 residues: Polyketide synthase 1 (391 aa).

The active site involves C164.

The protein belongs to the thiolase-like superfamily. Chalcone/stilbene synthases family. Homodimer. Expressed in fruits.

The catalysed reaction is (E)-4-coumaroyl-CoA + 3 malonyl-CoA + 3 H(+) = 2',4,4',6'-tetrahydroxychalcone + 3 CO2 + 4 CoA. It functions in the pathway secondary metabolite biosynthesis; flavonoid biosynthesis. In terms of biological role, polyketide synthase producing naringenin chalcone and slightly p-coumaryltriacetic acid lactone (CTAL). Can use p-coumaryl-CoA as substrate. This chain is Polyketide synthase 1 (PKS1), found in Rubus idaeus (Raspberry).